The following is a 102-amino-acid chain: Small ribosomal subunit protein uS10 (102 aa).

Belongs to the universal ribosomal protein uS10 family. Part of the 30S ribosomal subunit.

In terms of biological role, involved in the binding of tRNA to the ribosomes. The sequence is that of Small ribosomal subunit protein uS10 from Thermosipho africanus (strain TCF52B).